The chain runs to 230 residues: Orotidine 5'-phosphate decarboxylase (230 aa).

Substrate is bound by residues D10, K31, 58 to 67 (DLKLHDIPNT), T117, R179, Q188, G208, and R209. K60 (proton donor) is an active-site residue.

This sequence belongs to the OMP decarboxylase family. Type 1 subfamily. As to quaternary structure, homodimer.

It carries out the reaction orotidine 5'-phosphate + H(+) = UMP + CO2. The protein operates within pyrimidine metabolism; UMP biosynthesis via de novo pathway; UMP from orotate: step 2/2. Functionally, catalyzes the decarboxylation of orotidine 5'-monophosphate (OMP) to uridine 5'-monophosphate (UMP). The polypeptide is Orotidine 5'-phosphate decarboxylase (Staphylococcus aureus (strain Mu3 / ATCC 700698)).